The chain runs to 38 residues: Large ribosomal subunit protein bL36 (38 aa).

This sequence belongs to the bacterial ribosomal protein bL36 family.

In Alcanivorax borkumensis (strain ATCC 700651 / DSM 11573 / NCIMB 13689 / SK2), this protein is Large ribosomal subunit protein bL36.